We begin with the raw amino-acid sequence, 89 residues long: Large ribosomal subunit protein uL23cz/uL23cy (89 aa).

Belongs to the universal ribosomal protein uL23 family. In terms of assembly, part of the 50S ribosomal subunit.

The protein resides in the plastid. Its subcellular location is the chloroplast. Its function is as follows. Binds to 23S rRNA. The polypeptide is Large ribosomal subunit protein uL23cz/uL23cy (rpl23-A) (Pelargonium hortorum (Common geranium)).